A 421-amino-acid chain; its full sequence is Serine hydroxymethyltransferase (421 aa).

(6S)-5,6,7,8-tetrahydrofolate contacts are provided by residues L118 and 122-124; that span reads GHL. K226 is modified (N6-(pyridoxal phosphate)lysine). E242 lines the (6S)-5,6,7,8-tetrahydrofolate pocket.

The protein belongs to the SHMT family. Homodimer. Pyridoxal 5'-phosphate serves as cofactor.

Its subcellular location is the cytoplasm. It carries out the reaction (6R)-5,10-methylene-5,6,7,8-tetrahydrofolate + glycine + H2O = (6S)-5,6,7,8-tetrahydrofolate + L-serine. It functions in the pathway one-carbon metabolism; tetrahydrofolate interconversion. The protein operates within amino-acid biosynthesis; glycine biosynthesis; glycine from L-serine: step 1/1. Catalyzes the reversible interconversion of serine and glycine with tetrahydrofolate (THF) serving as the one-carbon carrier. This reaction serves as the major source of one-carbon groups required for the biosynthesis of purines, thymidylate, methionine, and other important biomolecules. Also exhibits THF-independent aldolase activity toward beta-hydroxyamino acids, producing glycine and aldehydes, via a retro-aldol mechanism. The chain is Serine hydroxymethyltransferase from Mycoplasmopsis synoviae (strain 53) (Mycoplasma synoviae).